We begin with the raw amino-acid sequence, 295 residues long: Zinc finger CCCH domain-containing protein 44 (295 aa).

The segment at 1–31 is disordered; that stretch reads MEAGGGKRAAPEGTNGAAKRARASESSQVGV. 2 consecutive C3H1-type zinc fingers follow at residues 32–60 and 98–126; these read GSKLKPCTKFFSTSGCPFGSSCHFLHNFP and SVKTRMCNKYNTAEGCKWGSKCHFAHGER. The KH domain maps to 166–230; it reads SATAKISVDA…DQIKHASAMV (65 aa). The C3H1-type 3 zinc finger occupies 259–286; that stretch reads NFKTKLCENFNKGSCTFGDRCHFAHGES.

This Oryza sativa subsp. japonica (Rice) protein is Zinc finger CCCH domain-containing protein 44.